Consider the following 2390-residue polypeptide: Spectrin beta chain, non-erythrocytic 2 (2390 aa).

An N-acetylserine modification is found at Ser-2. Residues 2–278 (SSTLSPTDFD…IITYVATYYH (277 aa)) are actin-binding. Phosphoserine occurs at positions 6 and 31. Calponin-homology (CH) domains lie at 57–161 (AVQK…LRFQ) and 176–281 (KSAK…HYFS). Spectrin repeat units lie at residues 306–414 (LVEK…LALR), 427–527 (AARF…RERL), 532–639 (ELQK…RLEE), 642–744 (RLWR…QRLA), 749–849 (LYQF…RALE), and 855–954 (YTML…KAAL). Residue Ser-959 is modified to Phosphoserine. 11 Spectrin repeats span residues 960–1063 (IQNY…SLGE), 1066–1169 (RLQD…GRLA), 1174–1262 (FQGF…RHKK), 1279–1379 (EQQH…ARSL), 1384–1485 (RAEL…RRLQ), 1489–1586 (EQHQ…RLED), 1589–1692 (RAQQ…RLQE), 1696–1797 (LCQL…GQVL), 1801–1904 (YELQ…QLLL), 1910–2010 (FRFF…DWLQ), and 2017–2076 (VFGR…EKLT). Ser-1073 carries the post-translational modification Phosphoserine. Residues 2081 to 2096 (REKERKRKREEEERRK) show a composition bias toward basic and acidic residues. Disordered regions lie at residues 2081–2222 (REKE…EQME) and 2331–2390 (SSAS…KKNK). Over residues 2116–2125 (QTASDTTWDG) the composition is skewed to polar residues. Residues Ser-2171 and Ser-2199 each carry the phosphoserine modification. Residues 2218–2328 (QEQMEGMLCR…WLRVVNAAIA (111 aa)) enclose the PH domain. Thr-2354 carries the phosphothreonine modification. At Ser-2359 the chain carries Phosphoserine. Positions 2370–2383 (RSKDGREREREKRF) are enriched in basic and acidic residues.

Belongs to the spectrin family. Highly expressed in brain, kidney, pancreas, and liver, and at lower levels in lung and placenta.

Its subcellular location is the cytoplasm. It localises to the cytoskeleton. The protein resides in the cell cortex. Probably plays an important role in neuronal membrane skeleton. The protein is Spectrin beta chain, non-erythrocytic 2 (SPTBN2) of Homo sapiens (Human).